Here is a 299-residue protein sequence, read N- to C-terminus: Single myb histone 1 (299 aa).

Residues 1-61 (MGAPKQRWTP…KWRNLSVTAG (61 aa)) form the HTH myb-type domain. Residues 28 to 57 (WRTILRDSDFSALLRLRSNVDLKDKWRNLS) constitute a DNA-binding region (H-T-H motif). The 69-residue stretch at 124-192 (SVARLDDLIL…KVNQKYRIAP (69 aa)) folds into the H15 domain. Residues 238–279 (EEAAAFAAKAVAEAEVAIAEAEEAARVAEAAENDAEAAKAFL) adopt a coiled-coil conformation.

It belongs to the histone H1/H5 family. SMH subfamily. As to quaternary structure, forms a homodimer and heterodimers. As to expression, expressed in leaves.

It localises to the nucleus. The protein resides in the chromosome. The protein localises to the nucleolus. Its subcellular location is the telomere. Binds preferentially double-stranded telomeric repeats 5'-TTTAGGG-3', but can also bind to the single G-rich and C-rich telomeric strand. This Zea mays (Maize) protein is Single myb histone 1 (SMH1).